The following is a 373-amino-acid chain: 3-dehydroquinate synthase (373 aa).

Residues 107-111, 131-132, lysine 144, and lysine 153 each bind NAD(+); these read GVIGD and TS. Zn(2+) contacts are provided by glutamate 186, histidine 249, and histidine 267.

The protein belongs to the sugar phosphate cyclases superfamily. Dehydroquinate synthase family. The cofactor is Co(2+). Zn(2+) serves as cofactor. Requires NAD(+) as cofactor.

Its subcellular location is the cytoplasm. The enzyme catalyses 7-phospho-2-dehydro-3-deoxy-D-arabino-heptonate = 3-dehydroquinate + phosphate. It functions in the pathway metabolic intermediate biosynthesis; chorismate biosynthesis; chorismate from D-erythrose 4-phosphate and phosphoenolpyruvate: step 2/7. Functionally, catalyzes the conversion of 3-deoxy-D-arabino-heptulosonate 7-phosphate (DAHP) to dehydroquinate (DHQ). This chain is 3-dehydroquinate synthase, found in Ruegeria sp. (strain TM1040) (Silicibacter sp.).